We begin with the raw amino-acid sequence, 619 residues long: Laccase (619 aa).

An N-terminal signal peptide occupies residues 1-21 (MKFLGIAALVAGLLAPSLVLG). The propeptide occupies 22–49 (APAPGTEGVNLLTPVDKRQDSQAERYGG). Cysteines 55 and 63 form a disulfide. 2 consecutive Plastocyanin-like domains span residues 84–207 (TRRY…IVIN) and 216–373 (VDLG…LPTN). Residue asparagine 139 is glycosylated (N-linked (GlcNAc...) asparagine). Residues histidine 144, histidine 146, histidine 189, and histidine 191 each contribute to the Cu cation site. Cystine bridges form between cysteine 165-cysteine 586 and cysteine 349-cysteine 383. N-linked (GlcNAc...) asparagine glycosylation is found at asparagine 282, asparagine 295, and asparagine 340. N-linked (GlcNAc...) asparagine glycosylation is found at asparagine 422 and asparagine 444. The Plastocyanin-like 3 domain maps to 431-566 (NKPVLEYVLT…GGLSNQFLER (136 aa)). Residues histidine 477, histidine 480, histidine 482, histidine 548, cysteine 549, histidine 550, and histidine 554 each contribute to the Cu cation site. Residues 607–619 (RSGVKAREVKMKW) constitute a propeptide that is removed on maturation.

Belongs to the multicopper oxidase family. Cu cation is required as a cofactor.

The protein localises to the secreted. It carries out the reaction 4 hydroquinone + O2 = 4 benzosemiquinone + 2 H2O. Its function is as follows. Lignin degradation and detoxification of lignin-derived products. The polypeptide is Laccase (lacc) (Neurospora crassa (strain ATCC 24698 / 74-OR23-1A / CBS 708.71 / DSM 1257 / FGSC 987)).